Here is a 235-residue protein sequence, read N- to C-terminus: Superoxide dismutase [Mn] 3.1, mitochondrial (235 aa).

The N-terminal 31 residues, 1–31, are a transit peptide targeting the mitochondrion; the sequence is MALRTLASKKVLSFPFGGAGRPLAAAASARG. Mn(2+) contacts are provided by H59, H107, D196, and H200.

It belongs to the iron/manganese superoxide dismutase family. In terms of assembly, homotetramer. The cofactor is Mn(2+).

The protein localises to the mitochondrion matrix. The enzyme catalyses 2 superoxide + 2 H(+) = H2O2 + O2. In terms of biological role, destroys superoxide anion radicals which are normally produced within the cells and which are toxic to biological systems. In Zea mays (Maize), this protein is Superoxide dismutase [Mn] 3.1, mitochondrial (SODA.4).